We begin with the raw amino-acid sequence, 108 residues long: Acid stress chaperone HdeB (108 aa).

Positions 1 to 29 (MNISSLRKAFIFMGAVAALSLVNAQSALA) are cleaved as a signal peptide. Residue K93 is modified to N6-acetyllysine.

The protein belongs to the HdeB family.

It localises to the periplasm. Required for optimal acid stress protection, which is important for survival of enteric bacteria in the acidic environment of the host stomach. Exhibits a chaperone-like activity at acidic pH by preventing the aggregation of many different periplasmic proteins. The polypeptide is Acid stress chaperone HdeB (Escherichia coli O6:H1 (strain CFT073 / ATCC 700928 / UPEC)).